The chain runs to 468 residues: ATP synthase subunit beta (468 aa).

Position 148-155 (148-155 (GGAGVGKT)) interacts with ATP.

It belongs to the ATPase alpha/beta chains family. As to quaternary structure, F-type ATPases have 2 components, CF(1) - the catalytic core - and CF(0) - the membrane proton channel. CF(1) has five subunits: alpha(3), beta(3), gamma(1), delta(1), epsilon(1). CF(0) has three main subunits: a(1), b(2) and c(9-12). The alpha and beta chains form an alternating ring which encloses part of the gamma chain. CF(1) is attached to CF(0) by a central stalk formed by the gamma and epsilon chains, while a peripheral stalk is formed by the delta and b chains.

Its subcellular location is the cell inner membrane. The enzyme catalyses ATP + H2O + 4 H(+)(in) = ADP + phosphate + 5 H(+)(out). In terms of biological role, produces ATP from ADP in the presence of a proton gradient across the membrane. The catalytic sites are hosted primarily by the beta subunits. The chain is ATP synthase subunit beta from Xanthomonas euvesicatoria pv. vesicatoria (strain 85-10) (Xanthomonas campestris pv. vesicatoria).